The following is a 300-amino-acid chain: Protein SPEAR4 (300 aa).

Over residues 1 to 10 (MCSKTSSVSY) the composition is skewed to polar residues. Positions 1-45 (MCSKTSSVSYGNREDDDNYSSLCPKKQKHNNGGKKRVPRRGPGVA) are disordered. Basic residues predominate over residues 25–39 (KKQKHNNGGKKRVPR). The SPL motif lies at 40 to 48 (RGPGVAELE). The short motif at 294-300 (IDLRLKL) is the EAR element.

As to quaternary structure, interacts with SPL and SPEAR2. As to expression, expressed in leaves.

Its function is as follows. Adapter-like transcriptional repressor recruiting TPL/TPR coepressors to inhibit TCP transcription factors. May be involved in leaf development. This Arabidopsis thaliana (Mouse-ear cress) protein is Protein SPEAR4.